Here is a 69-residue protein sequence, read N- to C-terminus: Guanine nucleotide-binding protein G(I)/G(S)/G(O) subunit gamma-T2 (69 aa).

Cys-66 carries the post-translational modification Cysteine methyl ester. Cys-66 is lipidated: S-farnesyl cysteine. The propeptide at 67–69 (LIS) is removed in mature form.

This sequence belongs to the G protein gamma family. G proteins are composed of 3 units, alpha, beta and gamma. As to expression, retinal cones.

The protein localises to the cell membrane. Functionally, guanine nucleotide-binding proteins (G proteins) are involved as a modulator or transducer in various transmembrane signaling systems. The beta and gamma chains are required for the GTPase activity, for replacement of GDP by GTP, and for G protein-effector interaction. This Homo sapiens (Human) protein is Guanine nucleotide-binding protein G(I)/G(S)/G(O) subunit gamma-T2 (GNGT2).